The following is a 472-amino-acid chain: MSEFPFEISPMFEGERVRKEGMFVELGGPKSLGLELVRAKPMDEIEDGKVTIVGPDLKDMEEGKTYPWAMIFHVGGELVEPDLESVIERRVHDFINYCQGIMHLNQRYDVWMRISKDTAAKMDSFEPFGKAVMMLFKTELPFIEKMQVTFYTDQAEVEKQMAEAMEIFKARDARTKDLHDEDVDVFYGCTLCQSFAPTNVCVVSPDRVSLCGAINWFDGRAAAKVDPEGPQFAIEKGELLDAKTGEYSGVNEVAKKLSSGEFDKIKLHSFFDAPHTSCGCFEVVGFYIPEVDGIGWVNREYQGMAPNGLGFSTMAGQTGGGKQIVGFLGIGINYFYSPKFIQADGGWNRVVWLPSMLKEKIDEAIPDDMKDKIATEKDVTDIESLKTFLKEKNHPVVANWAAEAEEEEEEEEEEEEVAAEAAPMMMPAAGFQMPAMPAMPMMSGGAGGIKLTFKNAKITIDRMIISEKKEKK.

[Ni-Fe-S] cluster-binding residues include cysteine 189, cysteine 192, cysteine 278, and cysteine 280.

Belongs to the CdhC family. Monomer. The ACDS complex is made up of alpha, epsilon, beta, gamma and delta chains with a probable stoichiometry of (alpha(2)epsilon(2))(4)-beta(8)-(gamma(1)delta(1))(8) (Potential). [Ni-Fe-S] cluster serves as cofactor.

The enzyme catalyses Co(I)-[corrinoid Fe-S protein] + acetyl-CoA + H(+) = methyl-Co(III)-[corrinoid Fe-S protein] + CO + CoA. It participates in one-carbon metabolism; methanogenesis from acetate. Functionally, part of a complex that catalyzes the reversible cleavage of acetyl-CoA, allowing growth on acetate as sole source of carbon and energy. The alpha-epsilon complex generates CO from CO(2), while the beta subunit (this protein) combines the CO with CoA and a methyl group to form acetyl-CoA. The methyl group, which is incorporated into acetyl-CoA, is transferred to the beta subunit by a corrinoid iron-sulfur protein (the gamma-delta complex). The chain is Acetyl-CoA decarbonylase/synthase complex subunit beta 2 (cdhC2) from Methanosarcina thermophila.